Reading from the N-terminus, the 1070-residue chain is Protocadherin-8 (1070 aa).

An N-terminal signal peptide occupies residues 1 to 29; sequence MSPAKRWGSPCLFPLQLFSLCWVLSVAQS. Cadherin domains lie at 30-135, 136-245, 247-354, 393-497, 498-609, and 615-721; these read KTVR…APRF, PRAQ…SPAF, QGAV…APEI, QEAG…APIF, TKPV…SPIL, and ANGS…VPAS. The Extracellular segment spans residues 30–747; sequence KTVRYSTFEE…SGPSLQWDTP (718 aa). A glycan (N-linked (GlcNAc...) asparagine) is linked at N616. Low complexity predominate over residues 716–725; it reads SAVPASSGSP. Positions 716–740 are disordered; it reads SAVPASSGSPEHSRPPGSRLAPSGP. Residues 748–768 traverse the membrane as a helical segment; it reads LIVIIVLAGSCTLLLAAIIAI. Residues 769-1070 lie on the Cytoplasmic side of the membrane; the sequence is ATTCNRRKKE…SPKKGINENV (302 aa). 3 disordered regions span residues 777–859, 906–928, and 1046–1070; these read KEVR…TGES, REAE…DSDS, and IGVP…NENV. Composition is skewed to basic and acidic residues over residues 780 to 790 and 906 to 921; these read RKGGALREERP and REAE…KGDS. A Phosphoserine modification is found at S1053.

The N-terminal extracellular domain forms homophilic interactions; these interactions activate p38 MAPK via TAOK2 and trigger endocytosis. Interacts with CDH2; this interaction may lead to CDH2 cointernalization. Interacts with CDH11. Interacts with TAOK2.

The protein resides in the cell membrane. It is found in the cell projection. Its subcellular location is the dendrite. The protein localises to the presynaptic cell membrane. It localises to the postsynaptic cell membrane. Calcium-dependent cell-adhesion protein. May play a role in activity-induced synaptic reorganization underlying long term memory. Could be involved in CDH2 internalization through TAOK2/p38 MAPK pathway. In hippocampal neurons, may play a role in the down-regulation of dendritic spines, maybe through its action on CDH2 endocytosis. In Mus musculus (Mouse), this protein is Protocadherin-8 (Pcdh8).